Here is a 209-residue protein sequence, read N- to C-terminus: Probable GTP-binding protein EngB (209 aa).

In terms of domain architecture, EngB-type G spans 22–198 (TPLEIAFVGR…NRTVGSWFDA (177 aa)). 2 residues coordinate Mg(2+): serine 37 and threonine 59.

Belongs to the TRAFAC class TrmE-Era-EngA-EngB-Septin-like GTPase superfamily. EngB GTPase family. Mg(2+) serves as cofactor.

Necessary for normal cell division and for the maintenance of normal septation. This Neisseria gonorrhoeae (strain ATCC 700825 / FA 1090) protein is Probable GTP-binding protein EngB.